The primary structure comprises 436 residues: MESLNQFVNSLAPKLSHWRRDFHHYAESGWVEFRTATLVAEELHQLGYSLALGREVVNESSRMGLPDEFTLQREFERARQQGALAQWIAAFEGGFTGIVATLDTGRPGPVMAFRVDMDALDLSEEQDVSHRPYRDGFASCNAGMMHACGHDGHTAIGLGLAHTLKQFESGLHGVIKLIFQPAEEGTRGARAMVDAGVVDDVDYFTAVHIGTGVPAGTVVCGSDNFMATTKFDAHFTGTAAHAGAKPEDGHNALLAAAQATLALHAIAPHSEGASRVNVGVMQAGSGRNVVPASALLKVETRGASDVINQYVFDRAQQAIQGAATMYGVGVETRLMGAATASSPSPQWVAWLQSQAAQVAGVNQAIERVEAPAGSEDATLMMARVQQHQGQASYVVFGTQLAAGHHNEKFDFDEQVLAIAVETLARTALNFPWTRGI.

The protein belongs to the peptidase M20 family. As to quaternary structure, forms a heterodimer with AbgB. Mn(2+) serves as cofactor.

Component of the p-aminobenzoyl-glutamate hydrolase multicomponent enzyme system which catalyzes the cleavage of p-aminobenzoyl-glutamate (PABA-GLU) to form p-aminobenzoate (PABA) and glutamate. AbgAB does not degrade dipeptides and the physiological role of abgABT should be clarified. The polypeptide is p-aminobenzoyl-glutamate hydrolase subunit A (abgA) (Escherichia coli (strain K12)).